The following is a 319-amino-acid chain: Methionyl-tRNA formyltransferase (319 aa).

Residue 113-116 (SLLP) participates in (6S)-5,6,7,8-tetrahydrofolate binding.

The protein belongs to the Fmt family.

The enzyme catalyses L-methionyl-tRNA(fMet) + (6R)-10-formyltetrahydrofolate = N-formyl-L-methionyl-tRNA(fMet) + (6S)-5,6,7,8-tetrahydrofolate + H(+). Its function is as follows. Attaches a formyl group to the free amino group of methionyl-tRNA(fMet). The formyl group appears to play a dual role in the initiator identity of N-formylmethionyl-tRNA by promoting its recognition by IF2 and preventing the misappropriation of this tRNA by the elongation apparatus. In Pseudomonas fluorescens (strain Pf0-1), this protein is Methionyl-tRNA formyltransferase.